We begin with the raw amino-acid sequence, 147 residues long: Ribonuclease H (147 aa).

The RNase H type-1 domain occupies 5-141; that stretch reads ARKQITLYSD…CDELARNEAE (137 aa). The Mg(2+) site is built by Asp14, Glu52, Asp74, and Asp133.

This sequence belongs to the RNase H family. As to quaternary structure, monomer. Mg(2+) is required as a cofactor.

The protein resides in the cytoplasm. The catalysed reaction is Endonucleolytic cleavage to 5'-phosphomonoester.. Functionally, endonuclease that specifically degrades the RNA of RNA-DNA hybrids. The sequence is that of Ribonuclease H from Sulfurovum sp. (strain NBC37-1).